Reading from the N-terminus, the 160-residue chain is Cytochrome b6-f complex subunit 4 (160 aa).

The next 3 helical transmembrane spans lie at 36-56, 95-115, and 127-147; these read LLYI…GLSV, LLGV…PFIE, and PVAM…GIGA.

The protein belongs to the cytochrome b family. PetD subfamily. The 4 large subunits of the cytochrome b6-f complex are cytochrome b6, subunit IV (17 kDa polypeptide, petD), cytochrome f and the Rieske protein, while the 4 small subunits are petG, petL, petM and petN. The complex functions as a dimer.

It is found in the plastid. Its subcellular location is the chloroplast thylakoid membrane. Functionally, component of the cytochrome b6-f complex, which mediates electron transfer between photosystem II (PSII) and photosystem I (PSI), cyclic electron flow around PSI, and state transitions. This Guillardia theta (Cryptophyte) protein is Cytochrome b6-f complex subunit 4.